Reading from the N-terminus, the 214-residue chain is MRIILLGAPGAGKGTQAQFIMEKYGIPQISTGDMLRAAVKAGSELGLKAKEIMDAGKLVTDELVIALVKERITAEDCRNGFLLDGFPRTIPQADAMKEAGIKVDNVLEFDVPDELIVERIVGRRVHAPSGRVYHVTFNPPRVEGKDDMTGEELTTRKDDQEETVRKRLVEYHQMTAPLIAYYSKEAAAGNTAYHKIDGTRKVTEVSAELATILG.

Residue 10-15 (GAGKGT) coordinates ATP. An NMP region spans residues 30–59 (STGDMLRAAVKAGSELGLKAKEIMDAGKLV). Residues Thr-31, Arg-36, 57–59 (KLV), 85–88 (GFPR), and Gln-92 contribute to the AMP site. Positions 122 to 159 (GRRVHAPSGRVYHVTFNPPRVEGKDDMTGEELTTRKDD) are LID. ATP contacts are provided by residues Arg-123 and 132–133 (VY). Positions 156 and 167 each coordinate AMP. ATP is bound at residue Arg-200.

This sequence belongs to the adenylate kinase family. In terms of assembly, monomer.

The protein localises to the cytoplasm. It carries out the reaction AMP + ATP = 2 ADP. Its pathway is purine metabolism; AMP biosynthesis via salvage pathway; AMP from ADP: step 1/1. Catalyzes the reversible transfer of the terminal phosphate group between ATP and AMP. Plays an important role in cellular energy homeostasis and in adenine nucleotide metabolism. In Erwinia tasmaniensis (strain DSM 17950 / CFBP 7177 / CIP 109463 / NCPPB 4357 / Et1/99), this protein is Adenylate kinase.